The primary structure comprises 239 residues: Adapter protein MecA (239 aa).

Positions glutamate 118–glycine 128 are enriched in basic and acidic residues. The interval glutamate 118–arginine 137 is disordered.

It belongs to the MecA family. In terms of assembly, homodimer.

Its function is as follows. Enables the recognition and targeting of unfolded and aggregated proteins to the ClpC protease or to other proteins involved in proteolysis. This is Adapter protein MecA from Staphylococcus aureus (strain USA300).